The chain runs to 255 residues: Cell division protein DivIB (255 aa).

The Cytoplasmic portion of the chain corresponds to M1 to R30. A helical transmembrane segment spans residues L31–P51. The Extracellular segment spans residues L52–K255. The 69-residue stretch at S53–Y121 folds into the POTRA domain.

This sequence belongs to the FtsQ/DivIB family. DivIB subfamily.

The protein localises to the cell membrane. In terms of biological role, cell division protein that may be involved in stabilizing or promoting the assembly of the division complex. In Bacillus cytotoxicus (strain DSM 22905 / CIP 110041 / 391-98 / NVH 391-98), this protein is Cell division protein DivIB.